Consider the following 397-residue polypeptide: Elongation factor Tu (397 aa).

Residues 10–206 form the tr-type G domain; that stretch reads KPHVNIGTIG…ACDDYIPEPV (197 aa). Residues 19–26 form a G1 region; sequence GHIDHGKT. Position 19-26 (19-26) interacts with GTP; sequence GHIDHGKT. Thr-26 lines the Mg(2+) pocket. The tract at residues 62–66 is G2; it reads GITIS. Residues 83 to 86 are G3; it reads DCPG. Residues 83–87 and 138–141 each bind GTP; these read DCPGH and NKAD. Positions 138–141 are G4; that stretch reads NKAD. The interval 176–178 is G5; it reads SAL.

Belongs to the TRAFAC class translation factor GTPase superfamily. Classic translation factor GTPase family. EF-Tu/EF-1A subfamily. As to quaternary structure, monomer.

It localises to the cytoplasm. It catalyses the reaction GTP + H2O = GDP + phosphate + H(+). GTP hydrolase that promotes the GTP-dependent binding of aminoacyl-tRNA to the A-site of ribosomes during protein biosynthesis. In Acidothermus cellulolyticus (strain ATCC 43068 / DSM 8971 / 11B), this protein is Elongation factor Tu.